The primary structure comprises 83 residues: uncharacterized protein (83 aa).

3 helical membrane-spanning segments follow: residues Val5–Ile22, Ile32–Ala49, and Ile56–Ala78.

The protein localises to the cell membrane. This is an uncharacterized protein from Rickettsia prowazekii (strain Madrid E).